A 109-amino-acid polypeptide reads, in one-letter code: Hainantoxin-XVIII (109 aa).

An N-terminal signal peptide occupies residues 1–18 (MKLSIIIIATSLVIAVVA). The propeptide occupies 19-46 (FPSKDSKAIENDKTEQRMEIVVQETARA). Disulfide bonds link cysteine 47/cysteine 62, cysteine 55/cysteine 68, cysteine 59/cysteine 108, and cysteine 61/cysteine 81.

It belongs to the neurotoxin 25 family. F7 subfamily. Expressed by the venom gland.

The protein localises to the secreted. Putative ion channel inhibitor. The polypeptide is Hainantoxin-XVIII (Cyriopagopus hainanus (Chinese bird spider)).